Reading from the N-terminus, the 601-residue chain is Elongation factor 4 (601 aa).

Residues 7–189 (KNIRNFSIVA…AIVTRLPPPM (183 aa)) enclose the tr-type G domain. Residues 19–24 (DHGKST) and 136–139 (NKVD) each bind GTP.

This sequence belongs to the TRAFAC class translation factor GTPase superfamily. Classic translation factor GTPase family. LepA subfamily.

The protein localises to the cell inner membrane. The catalysed reaction is GTP + H2O = GDP + phosphate + H(+). Its function is as follows. Required for accurate and efficient protein synthesis under certain stress conditions. May act as a fidelity factor of the translation reaction, by catalyzing a one-codon backward translocation of tRNAs on improperly translocated ribosomes. Back-translocation proceeds from a post-translocation (POST) complex to a pre-translocation (PRE) complex, thus giving elongation factor G a second chance to translocate the tRNAs correctly. Binds to ribosomes in a GTP-dependent manner. The chain is Elongation factor 4 from Xanthobacter autotrophicus (strain ATCC BAA-1158 / Py2).